A 171-amino-acid polypeptide reads, in one-letter code: Dual specificity protein phosphatase OPG106 (171 aa).

The segment at 1 to 27 (MDKKSLYKYLLLRSTGDMHKAKSPTIM) is dimerization. The 149-residue stretch at 23–171 (SPTIMTRVTN…IIEKYVIDKN (149 aa)) folds into the Tyrosine-protein phosphatase domain. Catalysis depends on Cys-110, which acts as the Phosphocysteine intermediate.

Belongs to the protein-tyrosine phosphatase family. Non-receptor class dual specificity subfamily. Homodimer.

The protein localises to the virion. Its subcellular location is the host cytoplasm. The catalysed reaction is O-phospho-L-tyrosyl-[protein] + H2O = L-tyrosyl-[protein] + phosphate. It catalyses the reaction O-phospho-L-seryl-[protein] + H2O = L-seryl-[protein] + phosphate. Functionally, serine/tyrosine phosphatase which down-regulates cellular antiviral response by dephosphorylating activated host STAT1 and blocking interferon (IFN)-stimulated innate immune responses. Dephosphorylates the OPG144 protein. This Bos taurus (Bovine) protein is Dual specificity protein phosphatase OPG106 (OPG106).